The following is a 687-amino-acid chain: ERI1 exoribonuclease 2 (687 aa).

Positions 38–226 (LIIIDFESTC…DDSRNTAKLA (189 aa)) constitute an Exonuclease domain. 3 residues coordinate Mg(2+): aspartate 42, glutamate 44, and aspartate 156. The active-site Proton acceptor is the glutamate 44. Glutamate 44 serves as a coordination point for AMP. The active-site Proton acceptor is histidine 213. AMP is bound at residue histidine 213. Residue aspartate 218 participates in Mg(2+) binding. Residues cysteine 595, cysteine 597, cysteine 620, and cysteine 633 each coordinate Zn(2+). The segment at 595-642 (CNCGRRAKRLTVSNAGPNQGKAFYTCSVKKRNEENKKGCDYFKWEQTV) adopts a GRF-type zinc-finger fold.

Belongs to the ERI2 family. Mg(2+) is required as a cofactor.

The sequence is that of ERI1 exoribonuclease 2 (eri2) from Xenopus laevis (African clawed frog).